Here is a 1032-residue protein sequence, read N- to C-terminus: Protein translocase subunit SecA (1032 aa).

ATP contacts are provided by residues Gln-121, 139–143 (GEGKT), and Asp-570. The disordered stretch occupies residues 945-975 (TAGGSENATEDAPKPAKRGVGGAARRVSNAA). The Zn(2+) site is built by Cys-994, Cys-996, Cys-1005, and His-1006.

Belongs to the SecA family. As to quaternary structure, monomer and homodimer. Part of the essential Sec protein translocation apparatus which comprises SecA, SecYEG and auxiliary proteins SecDF. Other proteins may also be involved. It depends on Zn(2+) as a cofactor.

Its subcellular location is the cell membrane. It localises to the cytoplasm. It carries out the reaction ATP + H2O + cellular proteinSide 1 = ADP + phosphate + cellular proteinSide 2.. Its function is as follows. Part of the Sec protein translocase complex. Interacts with the SecYEG preprotein conducting channel. Has a central role in coupling the hydrolysis of ATP to the transfer of proteins into and across the cell membrane, serving as an ATP-driven molecular motor driving the stepwise translocation of polypeptide chains across the membrane. The polypeptide is Protein translocase subunit SecA (Herpetosiphon aurantiacus (strain ATCC 23779 / DSM 785 / 114-95)).